A 492-amino-acid chain; its full sequence is Pre-mRNA-processing factor 19 (492 aa).

The U-box domain maps to 1–72 (MSFVCGISGE…APRNVSGTSI (72 aa)). WD repeat units lie at residues 207–246 (HSTG…VMQT), 249–288 (GHNK…SKAI), 291–330 (VHQA…SLCK), 336–375 (GSQI…VAAA), 378–417 (GHTA…NLKT), and 461–491 (DHSG…RVFS).

It belongs to the WD repeat PRP19 family. As to quaternary structure, homotetramer. Component of the NTC complex (or PRP19-associated complex) which is associated with the spliceosome.

Its subcellular location is the nucleus. The protein resides in the nucleoplasm. It catalyses the reaction S-ubiquitinyl-[E2 ubiquitin-conjugating enzyme]-L-cysteine + [acceptor protein]-L-lysine = [E2 ubiquitin-conjugating enzyme]-L-cysteine + N(6)-ubiquitinyl-[acceptor protein]-L-lysine.. The protein operates within protein modification; protein ubiquitination. Functionally, probable ubiquitin-protein ligase which is mainly involved pre-mRNA splicing and DNA repair. Core component of the NTC/Nineteen complex which is part of the spliceosome and participates in its assembly, its remodeling and is required for its activity. Together with emb-4, necessary for interaction of rnp-4, a probable exon junction complex component, with mRNAs and spliceosomal snRNAs. Plays a role in nuclear retention of unspliced mRNAs. The protein is Pre-mRNA-processing factor 19 (prp-19) of Caenorhabditis elegans.